A 93-amino-acid chain; its full sequence is YcgL domain-containing protein Shew_2183 (93 aa).

In terms of domain architecture, YcgL spans 1–85 (MICAVYKSRL…PPVNLLEEYK (85 aa)).

The polypeptide is YcgL domain-containing protein Shew_2183 (Shewanella loihica (strain ATCC BAA-1088 / PV-4)).